Consider the following 75-residue polypeptide: DNA-directed RNA polymerase subunit omega (75 aa).

This sequence belongs to the RNA polymerase subunit omega family. In cyanobacteria the RNAP catalytic core is composed of 2 alpha, 1 beta, 1 beta', 1 gamma and 1 omega subunit. When a sigma factor is associated with the core the holoenzyme is formed, which can initiate transcription.

It catalyses the reaction RNA(n) + a ribonucleoside 5'-triphosphate = RNA(n+1) + diphosphate. Promotes RNA polymerase assembly. Latches the N- and C-terminal regions of the beta' subunit thereby facilitating its interaction with the beta and alpha subunits. This is DNA-directed RNA polymerase subunit omega from Parasynechococcus marenigrum (strain WH8102).